Reading from the N-terminus, the 464-residue chain is MSSESPQDQPQKEQISNNVGVTTNSTSNEETSRSQDDNVKEVNGNDDTKEEEQEEDAELDDLFGDDNDDDDDDDVKKSETEKSDSDSDEDDEGENINHRSRHRESLGLDDDEAEEQAMYTRKFYGEDANNFSDQDETTHTFKEENVELVRHIIPSKANVNETASHNEIFYARIPNFLTIDPIPFDPPSFEAKVNERASNSASREDQLDDRLIDENTVRWRYSRDKDQHVFKESNTQIVQWSDGTYSLKVGEECTDILVNDTSNTFLTVSHDQQELIQCYEGGEIKKTLMFIPTSTNSKIHQKLSKAVIRRNQRQSKGPGTYIVSMDPEVEKKELERKQSQILRDRRRRQLKEKEKQESPDAAFETGFRKQNSPTTYGASRRNEYEEDDFLVDDDEEEEAAFDDEEDDNEEEEEEEDADEENASRLRNLKREGAAMYREEEEEEKDRSETKRRRVAVIEDDEDED.

The span at 1–15 shows a compositional bias: polar residues; it reads MSSESPQDQPQKEQI. The disordered stretch occupies residues 1–111; sequence MSSESPQDQP…HRESLGLDDD (111 aa). Residues 16–29 show a composition bias toward low complexity; that stretch reads SNNVGVTTNSTSNE. The span at 30 to 40 shows a compositional bias: basic and acidic residues; it reads ETSRSQDDNVK. The span at 48–73 shows a compositional bias: acidic residues; it reads TKEEEQEEDAELDDLFGDDNDDDDDD. Residues 74–85 are compositionally biased toward basic and acidic residues; that stretch reads DVKKSETEKSDS. Residues S105, S132, S188, S358, and S372 each carry the phosphoserine modification. A disordered region spans residues 344–464; it reads DRRRRQLKEK…AVIEDDEDED (121 aa). The segment covering 368–377 has biased composition (polar residues); it reads RKQNSPTTYG. The span at 384 to 420 shows a compositional bias: acidic residues; sequence YEEDDFLVDDDEEEEAAFDDEEDDNEEEEEEEDADEE.

Belongs to the LEO1 family. As to quaternary structure, component of the PAF1 complex which consists of at least CDC73, CTR9, LEO1, PAF1 and RTF1.

It localises to the nucleus. Its subcellular location is the nucleoplasm. Its function is as follows. The PAF1 complex is a multifunctional complex. Involved in transcription initiation via genetic interactions with TATA-binding proteins. Involved in elongation. It regulates 3'-end formation of snR47 by modulating the recruitment or stable association of NRD1 and NAB3 with RNA polymerase II. Also has a role in transcription-coupled histone modification. Required for activation of RAD6 ubiquitin conjugate and the BRE1 ubiquitin ligase which ubiquitinate 'Lys-126' histone H2B. Activates the SET1 histone methyltransferase complex for methylation of 'Lys-4' of histone H3 and for methylation of 'Lys-73' of histone H3 by DOT1 and 'Lys-36' of histone H3 by SET2. The sequence is that of RNA polymerase-associated protein LEO1 (LEO1) from Saccharomyces cerevisiae (strain ATCC 204508 / S288c) (Baker's yeast).